Reading from the N-terminus, the 870-residue chain is Elastin (870 aa).

A signal peptide spans 1 to 27 (MAGLTAAVPQPGVLLILLLNLLHPAQP). Residues proline 39 and proline 75 each carry the 4-hydroxyproline modification. Proline 87 is subject to Hydroxyproline. At proline 105 the chain carries 4-hydroxyproline. Allysine is present on residues lysine 122 and lysine 126. 4 positions are modified to 4-hydroxyproline: proline 207, proline 220, proline 223, and proline 244. 2 positions are modified to allysine: lysine 290 and lysine 309. 4-hydroxyproline is present on proline 338. An allysine mark is found at lysine 360 and lysine 363. Proline 375 is subject to Hydroxyproline. Residues proline 402 and proline 408 each carry the 4-hydroxyproline modification. 2 positions are modified to hydroxyproline: proline 413 and proline 418. Allysine occurs at positions 434, 438, 441, 485, and 488. A 4-hydroxyproline mark is found at proline 518 and proline 539. Allysine occurs at positions 554, 558, 615, 619, and 623. A 4-hydroxyproline mark is found at proline 637, proline 646, proline 662, and proline 670. 2 positions are modified to allysine: lysine 677 and lysine 680. Position 715 is a 4-hydroxyproline (proline 715). Allysine is present on residues lysine 730, lysine 734, lysine 793, and lysine 796. Proline 842 is subject to 4-hydroxyproline. Cysteine 860 and cysteine 865 form a disulfide bridge.

This sequence belongs to the elastin family. The polymeric elastin chains are cross-linked together into an extensible 3D network. Forms a ternary complex with BGN and MFAP2. Interacts with MFAP2 via divalent cations (calcium &gt; magnesium &gt; manganese) in a dose-dependent and saturating manner. Interacts with FBLN5 and FBN1. Forms a ternary complex with FBN1 and FBLN2 or FBLN5. Interacts with MFAP4 in a Ca (2+)-dependent manner; this interaction promotes ELN self-assembly. Interacts with EFEMP2 with moderate affinity. Elastin is formed through the cross-linking of its soluble precursor tropoelastin. Cross-linking is initiated through the action of lysyl oxidase on exposed lysines to form allysine. Subsequent spontaneous condensation reactions with other allysine or unmodified lysine residues result in various bi-, tri-, and tetrafunctional cross-links. The most abundant cross-links in mature elastin fibers are lysinonorleucine, allysine aldol, desmosine, and isodesmosine. In terms of processing, hydroxylation on proline residues within the sequence motif, GXPG, is most likely to be 4-hydroxy as this fits the requirement for 4-hydroxylation in vertebrates.

It localises to the secreted. The protein localises to the extracellular space. Its subcellular location is the extracellular matrix. Major structural protein of tissues such as aorta and nuchal ligament, which must expand rapidly and recover completely. Molecular determinant of the late arterial morphogenesis, stabilizing arterial structure by regulating proliferation and organization of vascular smooth muscle. The protein is Elastin (Eln) of Rattus norvegicus (Rat).